The primary structure comprises 433 residues: GTPase Der (433 aa).

EngA-type G domains follow at residues 5-167 (KKVL…GEAN) and 174-349 (IKVG…DQLE). Residues 11 to 18 (GRPNVGKS), 58 to 62 (DTGGF), 119 to 122 (NKVD), 180 to 187 (GKPNSGKS), 227 to 231 (DTAGI), and 292 to 295 (SKWD) contribute to the GTP site. The 80-residue stretch at 350–429 (FKTSTPDLNK…PILVELREKI (80 aa)) folds into the KH-like domain.

Belongs to the TRAFAC class TrmE-Era-EngA-EngB-Septin-like GTPase superfamily. EngA (Der) GTPase family. In terms of assembly, associates with the 50S ribosomal subunit.

Functionally, GTPase that plays an essential role in the late steps of ribosome biogenesis. The polypeptide is GTPase Der (Borreliella afzelii (strain PKo) (Borrelia afzelii)).